Consider the following 732-residue polypeptide: Ionotropic receptor 40a (732 aa).

An N-terminal signal peptide occupies residues 1-19 (MHKFLALGLLPYLLGLLNS). N-linked (GlcNAc...) asparagine glycans are attached at residues asparagine 18, asparagine 235, and asparagine 299. Residues 20–369 (TRLTFIGNDE…RPFKQDIWPH (350 aa)) are Extracellular-facing. A helical membrane pass occupies residues 370 to 390 (LILTIIFSGPIFYGIIALPYI). The Cytoplasmic portion of the chain corresponds to 391 to 465 (WRRRWANSDV…NELHNGYRAK (75 aa)). A helical membrane pass occupies residues 466-486 (FLTIVYWIAATYVLADVYSAQ). Topologically, residues 487-688 (LTSQFARPAR…LNLRMLQGAF (202 aa)) are extracellular. The N-linked (GlcNAc...) asparagine glycan is linked to asparagine 531. A helical transmembrane segment spans residues 689-709 (IALGVGSLAAGVILLLEIVFI). At 710–732 (KLDQARLWMLCSRLQWIRYDRKV) the chain is on the cytoplasmic side.

This sequence belongs to the glutamate-gated ion channel (TC 1.A.10.1) family. In terms of tissue distribution, in the antenna, detected in sacculus neurons which innervate the first and second chambers (at protein level).

Its subcellular location is the cell membrane. Its function is as follows. Integral part of a neural sensory system in the antenna that provides the neural basis for the response to environmental changes in humidity (hygrosensation). Together with Ir25a and Ir93a, mediates the response of the hygrosensory sacculus neurons to changes in relative humidity and is required for dry detection behavior. This Drosophila melanogaster (Fruit fly) protein is Ionotropic receptor 40a.